A 152-amino-acid polypeptide reads, in one-letter code: Ribosome maturation factor RimP (152 aa).

Belongs to the RimP family.

It localises to the cytoplasm. Its function is as follows. Required for maturation of 30S ribosomal subunits. This Idiomarina loihiensis (strain ATCC BAA-735 / DSM 15497 / L2-TR) protein is Ribosome maturation factor RimP.